The primary structure comprises 148 residues: D-aminoacyl-tRNA deacylase (148 aa).

The Gly-cisPro motif, important for rejection of L-amino acids motif lies at 137–138 (GP).

The protein belongs to the DTD family. Homodimer.

The protein resides in the cytoplasm. It catalyses the reaction glycyl-tRNA(Ala) + H2O = tRNA(Ala) + glycine + H(+). The enzyme catalyses a D-aminoacyl-tRNA + H2O = a tRNA + a D-alpha-amino acid + H(+). An aminoacyl-tRNA editing enzyme that deacylates mischarged D-aminoacyl-tRNAs. Also deacylates mischarged glycyl-tRNA(Ala), protecting cells against glycine mischarging by AlaRS. Acts via tRNA-based rather than protein-based catalysis; rejects L-amino acids rather than detecting D-amino acids in the active site. By recycling D-aminoacyl-tRNA to D-amino acids and free tRNA molecules, this enzyme counteracts the toxicity associated with the formation of D-aminoacyl-tRNA entities in vivo and helps enforce protein L-homochirality. The chain is D-aminoacyl-tRNA deacylase from Ligilactobacillus salivarius (strain UCC118) (Lactobacillus salivarius).